A 304-amino-acid polypeptide reads, in one-letter code: Aspartate carbamoyltransferase catalytic subunit (304 aa).

Carbamoyl phosphate is bound by residues R49 and T50. K77 provides a ligand contact to L-aspartate. R99, H127, and Q130 together coordinate carbamoyl phosphate. Residues R160 and R211 each coordinate L-aspartate. Carbamoyl phosphate-binding residues include A252 and P253.

It belongs to the aspartate/ornithine carbamoyltransferase superfamily. ATCase family. Heterododecamer (2C3:3R2) of six catalytic PyrB chains organized as two trimers (C3), and six regulatory PyrI chains organized as three dimers (R2).

The catalysed reaction is carbamoyl phosphate + L-aspartate = N-carbamoyl-L-aspartate + phosphate + H(+). It functions in the pathway pyrimidine metabolism; UMP biosynthesis via de novo pathway; (S)-dihydroorotate from bicarbonate: step 2/3. Catalyzes the condensation of carbamoyl phosphate and aspartate to form carbamoyl aspartate and inorganic phosphate, the committed step in the de novo pyrimidine nucleotide biosynthesis pathway. This chain is Aspartate carbamoyltransferase catalytic subunit, found in Bacillus cereus (strain G9842).